The primary structure comprises 273 residues: MSNTSIRIAVAGAGGRMGRQLIQAVAQSEQATLGAALTRTDSALCGVDAGELAGIGALGVAISGELAAVKDDFDILIDFTRPDASMAYLAFCRRHHKGIVIGTTGFSDAQKEAIRAEAQETGVVFAANFSVGVNLMLKLLEKAAQVMGEEADIEIIEAHHRHKVDAPSGTALAMGEAIAGALGRDLARCAVYSREGHTGERKAKSIGFATVRAGDIVGEHTAMFAEIGERLEITHKASSRMTFASGAVRAAVWLSGQKRGFFDMVNVLNLDKI.

NAD(+) is bound at residue 12 to 17; it reads GAGGRM. Arg39 is an NADP(+) binding site. Residues 102–104 and 126–129 contribute to the NAD(+) site; these read GTT and AANF. His159 functions as the Proton donor/acceptor in the catalytic mechanism. (S)-2,3,4,5-tetrahydrodipicolinate is bound at residue His160. Catalysis depends on Lys163, which acts as the Proton donor. Position 169–170 (169–170) interacts with (S)-2,3,4,5-tetrahydrodipicolinate; it reads GT.

Belongs to the DapB family. As to quaternary structure, homotetramer.

The protein resides in the cytoplasm. The catalysed reaction is (S)-2,3,4,5-tetrahydrodipicolinate + NAD(+) + H2O = (2S,4S)-4-hydroxy-2,3,4,5-tetrahydrodipicolinate + NADH + H(+). It catalyses the reaction (S)-2,3,4,5-tetrahydrodipicolinate + NADP(+) + H2O = (2S,4S)-4-hydroxy-2,3,4,5-tetrahydrodipicolinate + NADPH + H(+). It functions in the pathway amino-acid biosynthesis; L-lysine biosynthesis via DAP pathway; (S)-tetrahydrodipicolinate from L-aspartate: step 4/4. Catalyzes the conversion of 4-hydroxy-tetrahydrodipicolinate (HTPA) to tetrahydrodipicolinate. The polypeptide is 4-hydroxy-tetrahydrodipicolinate reductase (Sodalis glossinidius (strain morsitans)).